The following is a 718-amino-acid chain: Serine/threonine-protein kinase tousled-like 2 (718 aa).

The segment at G24–S85 is disordered. Residues P29–S44 show a composition bias toward polar residues. A compositionally biased stretch (basic and acidic residues) spans S46–R61. Residues S73, Q94, L99, and S102 each carry the phosphoserine modification. The tract at residues Q147–T176 is disordered. The tract at residues N193–E244 is required for interaction with TLK1 and DYNLL1/LC8. 3 coiled-coil regions span residues N193–E244, A285–P315, and H349–Q397. The disordered stretch occupies residues L310–G337. Residues Y408–L687 enclose the Protein kinase domain. ATP is bound by residues L414–V422 and K437. The active-site Proton acceptor is the D538. S696 carries the phosphoserine; by CHEK1 modification.

Belongs to the protein kinase superfamily. Ser/Thr protein kinase family. In terms of assembly, monomer. May form homodimers; homodimerization may enhance autophosphoylation and enzymatic activity. Heterodimer with TLK1. Interacts with YWHAZ; association with 14-3-3 proteins such as YWHAZ regulates subcellular location. May also interact with FEZ1/LZTS1 and FEZ2. Interacts with CHD7 and CHD8. Interacts with DYNLL1/LC8. Requires Mg(2+) as cofactor. In terms of processing, phosphorylated at Ser-696, probably by CHEK1. Autophosphorylated; phosphorylation promotes the assembly of higher order oligomers and enzymatic activity. In terms of tissue distribution, ubiquitously expressed in all tissues examined, with high levels in heart and testis, in particular the pachytene spermatocytes and in round spermatids. Some evidence for the existence of a testis-specific isoform suggesting a role in spermatogenesis.

Its subcellular location is the nucleus. It is found in the nucleoplasm. The protein localises to the cytoplasm. The protein resides in the perinuclear region. It localises to the cytoskeleton. It carries out the reaction L-seryl-[protein] + ATP = O-phospho-L-seryl-[protein] + ADP + H(+). The enzyme catalyses L-threonyl-[protein] + ATP = O-phospho-L-threonyl-[protein] + ADP + H(+). Its activity is regulated as follows. Cell cycle-regulated, with maximal activity in the S-phase. Rapidly and transiently inhibited by phosphorylation following the generation of DNA double-stranded breaks during S-phase, probably by CHEK1, possibly at Ser-696. This inhibition is cell cycle checkpoint- and ATM-dependent. In terms of biological role, serine/threonine-protein kinase involved in the process of chromatin assembly and probably also DNA replication, transcription, repair, and chromosome segregation. Phosphorylates the chromatin assembly factors ASF1A and ASF1B. Phosphorylation of ASF1A prevents its proteasome-mediated degradation, thereby enhancing chromatin assembly. Negative regulator of amino acid starvation-induced autophagy. Functionally, testis-specific isoforms may play a role in spermatogenesis. Highly expressed in embryos throughout development. The sequence is that of Serine/threonine-protein kinase tousled-like 2 (Tlk2) from Mus musculus (Mouse).